Reading from the N-terminus, the 147-residue chain is Large ribosomal subunit protein uL13 (147 aa).

A disordered region spans residues 128-147 (PEHPHSAQQPVPYELKQVAQ).

The protein belongs to the universal ribosomal protein uL13 family. In terms of assembly, part of the 50S ribosomal subunit.

Functionally, this protein is one of the early assembly proteins of the 50S ribosomal subunit, although it is not seen to bind rRNA by itself. It is important during the early stages of 50S assembly. The chain is Large ribosomal subunit protein uL13 from Mycobacterium bovis (strain BCG / Pasteur 1173P2).